Consider the following 946-residue polypeptide: Protein translocase subunit SecA (946 aa).

Residues Q90, 108–112 (GEGKT), and D509 contribute to the ATP site.

Belongs to the SecA family. In terms of assembly, monomer and homodimer. Part of the essential Sec protein translocation apparatus which comprises SecA, SecYEG and auxiliary proteins SecDF. Other proteins may also be involved.

It is found in the cell inner membrane. Its subcellular location is the cellular thylakoid membrane. It localises to the cytoplasm. The catalysed reaction is ATP + H2O + cellular proteinSide 1 = ADP + phosphate + cellular proteinSide 2.. In terms of biological role, part of the Sec protein translocase complex. Interacts with the SecYEG preprotein conducting channel. Has a central role in coupling the hydrolysis of ATP to the transfer of proteins into and across the cell membrane, serving as an ATP-driven molecular motor driving the stepwise translocation of polypeptide chains across the membrane. Its function is as follows. Probably participates in protein translocation into and across both the cytoplasmic and thylakoid membranes in cyanobacterial cells. The polypeptide is Protein translocase subunit SecA (Synechococcus sp. (strain RCC307)).